Consider the following 490-residue polypeptide: MYKQPRQELEAYYFEPNSVEKLRYLPVNNSRKRFCTLEPFPDSPPYNALSTATYDDTCGSCVTDELNDFKHKIREIETVMMGPDSLDLLVDCTDSFDSTASQEINGWRSTLEAISRRDLRADLVSCAKAMSENDLMMAHSMMEKLRQMVSVSGEPIQRLGAYLLEGLVAQLASSGSSIYKALNRCPEPASTELLSYMHILYEVCPYFKFGYMSANGAIAEAMKEENRVHIIDFQIGQGSQWVTLIQAFAARPGGPPRIRITGIDDMTSAYARGGGLSIVGNRLAKLAKQFNVPFEFNSVSVSVSEVKPKNLGVRPGEALAVNFAFVLHHMPDESVSTENHRDRLLRMVKSLSPKVVTLVEQESNTNTAAFFPRFMETMNYYAAMFESIDVTLPRDHKQRINVEQHCLARDVVNIIACEGADRVERHELLGKWRSRFGMAGFTPYPLSPLVNSTIKSLLRNYSDKYRLEERDGALYLGWMHRDLVASCAWK.

The region spanning 110–490 (TLEAISRRDL…RDLVASCAWK (381 aa)) is the GRAS domain. Residues 117-178 (RDLRADLVSC…AQLASSGSSI (62 aa)) are leucine repeat I (LRI). Residues 197-262 (MHILYEVCPY…GGPPRIRITG (66 aa)) are VHIID. A VHIID motif is present at residues 228–232 (VHIID). The tract at residues 278–310 (IVGNRLAKLAKQFNVPFEFNSVSVSVSEVKPKN) is leucine repeat II (LRII). Residues 319–413 (LAVNFAFVLH…QHCLARDVVN (95 aa)) are PFYRE. The SAW stretch occupies residues 416–490 (ACEGADRVER…RDLVASCAWK (75 aa)).

Belongs to the GRAS family.

It is found in the cytoplasm. Its function is as follows. Probable transcription factor involved in phytochrome A (phyA) signal transduction. The protein is Scarecrow-like transcription factor PAT1 (PAT1) of Arabidopsis thaliana (Mouse-ear cress).